The chain runs to 637 residues: Phosphomethylpyrimidine synthase (637 aa).

Substrate-binding positions include Asn-242, Met-271, Tyr-300, His-336, 356–358 (SRG), 397–400 (DGLR), and Glu-436. His-440 lines the Zn(2+) pocket. Tyr-463 is a substrate binding site. His-504 serves as a coordination point for Zn(2+). Residues Cys-584, Cys-587, and Cys-592 each contribute to the [4Fe-4S] cluster site.

The protein belongs to the ThiC family. As to quaternary structure, homodimer. [4Fe-4S] cluster serves as cofactor.

It catalyses the reaction 5-amino-1-(5-phospho-beta-D-ribosyl)imidazole + S-adenosyl-L-methionine = 4-amino-2-methyl-5-(phosphooxymethyl)pyrimidine + CO + 5'-deoxyadenosine + formate + L-methionine + 3 H(+). It functions in the pathway cofactor biosynthesis; thiamine diphosphate biosynthesis. Functionally, catalyzes the synthesis of the hydroxymethylpyrimidine phosphate (HMP-P) moiety of thiamine from aminoimidazole ribotide (AIR) in a radical S-adenosyl-L-methionine (SAM)-dependent reaction. In Bordetella pertussis (strain Tohama I / ATCC BAA-589 / NCTC 13251), this protein is Phosphomethylpyrimidine synthase.